The following is a 451-amino-acid chain: Golgi reassembly-stacking protein 2 (451 aa).

Residue Gly-2 is the site of N-myristoyl glycine attachment. PDZ GRASP-type domains lie at 15–105 (EGYH…FCSF) and 111–199 (NVWH…YGYL). Positions 15–215 (EGYHVLRVQE…PFEEGKKISL (201 aa)) are GRASP. A dimethylated arginine mark is found at Arg-30 and Arg-47. The important for membrane binding stretch occupies residues 194 to 199 (IGYGYL). Ser-214 carries the post-translational modification Phosphoserine. The residue at position 222 (Thr-222) is a Phosphothreonine. Thr-225 carries the phosphothreonine; by MAPK modification. The span at 236-252 (LSSVSPPSLSPPGTTGV) shows a compositional bias: low complexity. Disordered stretches follow at residues 236 to 255 (LSSVSPPSLSPPGTTGVEQS) and 377 to 451 (EGSS…SEPS). The segment covering 410–424 (SSLTVDVTSPASKVP) has biased composition (polar residues). Residue Ser-411 is modified to Phosphoserine. Phosphothreonine occurs at positions 417 and 435. Residues Ser-443 and Ser-448 each carry the phosphoserine modification.

This sequence belongs to the GORASP family. Homodimer. Homooligomer. ER stress induces phosphorylation-dependent monomerization. Interacts with BLZF1/Golgin 45. Identified in a complex with RAB2 and GORASP2. Interacts with JAM2 and JAM3. Interacts with members of the p24 cargo receptors. Interacts with CNIH and the cytoplasmic domain of transmembrane TGFA, prior its transit in the trans-Golgi. Interacts with KCTD5. Interacts with TMED2 and TMED3. Interacts with SEC16A in response to ER stress. Interacts (via PDZ GRASP-type 1 domain) with core-glycosylated CFTR in response to ER stress. Myristoylated. Myristoylation is essential for the Golgi targeting. Post-translationally, palmitoylated. In terms of processing, phosphorylated in mitotic cells. ER stress-induced phosphorylation at Ser-443 induces monomerization and subsequent relocalization from Golgi to ER which is essential for mediating unconventional (ER/Golgi-independent) trafficking of CFTR to the cell membrane. In terms of tissue distribution, detected in lung, heart and testis. Colocalized in a polarized fashion in the acrosome region with JAM3 in round spermatids (at protein level).

It localises to the golgi apparatus membrane. It is found in the endoplasmic reticulum membrane. The protein localises to the golgi apparatus. Key structural protein of the Golgi apparatus. The membrane cisternae of the Golgi apparatus adhere to each other to form stacks, which are aligned side by side to form the Golgi ribbon. Acting in concert with GORASP1/GRASP65, is required for the formation and maintenance of the Golgi ribbon, and may be dispensable for the formation of stacks. However, other studies suggest that GORASP2 plays a role in assembly and membrane stacking of the Golgi cisternae, and in the process by which Golgi stacks reform after breakdown during mitosis and meiosis. May regulate the intracellular transport and presentation of a defined set of transmembrane proteins, such as transmembrane TGFA. Required for normal acrosome formation during spermiogenesis and normal male fertility, probably by promoting colocalization of JAM2 and JAM3 at contact sites between germ cells and Sertoli cells. Mediates ER stress-induced unconventional (ER/Golgi-independent) trafficking of core-glycosylated CFTR to cell membrane. In Mus musculus (Mouse), this protein is Golgi reassembly-stacking protein 2 (Gorasp2).